We begin with the raw amino-acid sequence, 127 residues long: Cuticle protein 4 (127 aa).

Gln1 is subject to Pyrrolidone carboxylic acid. Tandem repeats lie at residues Pro31–Ile39 and Pro84–Ile92.

This chain is Cuticle protein 4, found in Blaberus craniifer (Death's head cockroach).